The sequence spans 649 residues: MNLKEWLLFSDAVFFAQGTLAWSPSNSYTPANVSCDEDINLIRQASGPSDNETEWLKKRDVYTREALRSFLDRATSNFSDSSLVSQLFSNASDIPRIAVACSGGGYRAMLSGAGMLAAMDNRTDGANEHGLGGLLQSTTYLAGLSGGNWLVGTLAWNNWTSVQDIVNNMTEDDSIWDISNSIINPGGFMIVTTIKRWDHISDAVEGKQDAGFNVSLTDIWGRALSYNFFPSLYRGGVAYTWSTLRDVEVFQNGEMPFPISVADGRYPGTQIIDLNATVFEFNPFEMGSWDPTLNAFTDVKYLGTKVSNGEPVNKGQCVAGYDNTGFIMGTSSSLFNQFLLQINSTSLPSFIKNLVTGFLDDLSEDEDDIAIYAPNPFKDTSYIQDNFSKSISESDYLYLVDGGEDNQNIPLVPLVQDERNVDVIFALDNSADTDYYWPDGASLVSTYERQFSSQGLNMSFPYVPDKRTFVNLGLADKPSFFGCDAQNLTDLNYIPPLVVYIPNARHSYNSNTSTFKLSYTDDERLKMIKNGFEAATRGNLTDDSSFMGCVACAVMRRKQQSLNATLPEECSTCFTNYCWNGTIDDTPVSGLDNSDFDPTAASSAYSAYNTESYSSSSATGSKKNGAGLPATPTSFTSILTLLTAIAGFL.

A signal peptide spans 1–21; it reads MNLKEWLLFSDAVFFAQGTLA. 17 N-linked (GlcNAc...) asparagine glycosylation sites follow: Asn-32, Asn-51, Asn-77, Asn-90, Asn-121, Asn-158, Asn-168, Asn-213, Asn-275, Asn-343, Asn-386, Asn-457, Asn-487, Asn-511, Asn-539, Asn-563, and Asn-580. The region spanning 34–584 is the PLA2c domain; the sequence is SCDEDINLIR…TNYCWNGTID (551 aa).

Belongs to the lysophospholipase family.

The protein resides in the secreted. The enzyme catalyses a 1-acyl-sn-glycero-3-phosphocholine + H2O = sn-glycerol 3-phosphocholine + a fatty acid + H(+). Its function is as follows. Catalyzes the release of fatty acids from lysophospholipids. The chain is Lysophospholipase from Torulaspora delbrueckii (Yeast).